Consider the following 238-residue polypeptide: ATP synthase subunit a (238 aa).

A run of 7 helical transmembrane segments spans residues 35-55, 61-81, 94-114, 128-148, 151-171, 190-210, and 211-231; these read SNVIYAWFAMVLLIILGTLAT, VPSGLQNFFEVVVGGLESFVV, FLCALFLFIITGNLIGLVPGL, ALTVFAYYNFWGIRMWGAGYI, FMGPFWWLVPLMLPIEIISHL, IVLVLLFALAPVVGTFPMYFL, and FSLADCIQAFVFFMLAMIYLK.

This sequence belongs to the ATPase A chain family. F-type ATPases have 2 components, CF(1) - the catalytic core - and CF(0) - the membrane proton channel. CF(1) has five subunits: alpha(3), beta(3), gamma(1), delta(1), epsilon(1). CF(0) has three main subunits: a(1), b(2) and c(9-12). The alpha and beta chains form an alternating ring which encloses part of the gamma chain. CF(1) is attached to CF(0) by a central stalk formed by the gamma and epsilon chains, while a peripheral stalk is formed by the delta and b chains.

The protein localises to the cell inner membrane. Its function is as follows. Key component of the proton channel; it plays a direct role in the translocation of protons across the membrane. This chain is ATP synthase subunit a, found in Solidesulfovibrio magneticus (strain ATCC 700980 / DSM 13731 / RS-1) (Desulfovibrio magneticus).